The primary structure comprises 1197 residues: Serine/threonine-protein kinase pakA (1197 aa).

Disordered regions lie at residues 1–96 (MEEK…PIYR), 328–383 (QKED…KNID), 430–468 (REEE…EQRN), 485–543 (EEEE…NLMG), and 562–819 (NSSG…RVGT). Residues 19-30 (QKFEQFLDKTDK) show a composition bias toward basic and acidic residues. Residues 34–49 (ATRNNYRGPVSSSTGI) show a composition bias toward polar residues. Residues 51–69 (NDKEKKSHSYFKVREEGSN) are compositionally biased toward basic and acidic residues. The span at 70–79 (KRPSSFSASN) shows a compositional bias: polar residues. 2 stretches are compositionally biased toward low complexity: residues 80 to 94 (PITP…SSPI) and 346 to 381 (NNNN…NNKN). Over residues 439-458 (RVERELASRRRQEEDRIKRE) the composition is skewed to basic and acidic residues. Residues 494-523 (SQLQSSQQQQKSSSTQRSSNTVTSTSSSST) are compositionally biased toward low complexity. Over residues 524–536 (GGDSNPSTSQKPT) the composition is skewed to polar residues. Residue threonine 585 is modified to Phosphothreonine; by PKB. The span at 593–615 (SENTPLVSSIDNNGVNNKMSRSH) shows a compositional bias: polar residues. Low complexity-rich tracts occupy residues 636–653 (NVNN…NNNH) and 671–707 (SSSM…SSPT). A compositionally biased stretch (polar residues) spans 718–727 (TTSTGSTRKG). A compositionally biased stretch (basic and acidic residues) spans 728–737 (SISEREDKKK). Residues 739–756 (SSSSTSSSSSSNGGLSSS) show a composition bias toward low complexity. Over residues 757-790 (GKDHKKDHSSEEKEKEKKSFFNKLFSKEKKDHHS) the composition is skewed to basic and acidic residues. The 14-residue stretch at 817–830 (VGTPFNVKHDVHVN) folds into the CRIB domain. The region spanning 911–1164 (YYNINKIGEG…SSSLLHHPFL (254 aa)) is the Protein kinase domain. ATP contacts are provided by residues 917 to 925 (IGEGGAGEV) and lysine 940. Aspartate 1032 (proton acceptor) is an active-site residue.

Belongs to the protein kinase superfamily. STE Ser/Thr protein kinase family. STE20 subfamily. Requires Mg(2+) as cofactor. In terms of processing, phosphorylation on Thr-585 results in cAMP-mediated activation and localization to the cytoskeleton. In terms of tissue distribution, colocalizes with myosin II to the cleavage furrow of cells undergoing cytokinesis and the posterior cortex of polarized cells.

The protein localises to the cytoplasm. It is found in the cytosol. The protein resides in the cytoskeleton. The catalysed reaction is L-seryl-[protein] + ATP = O-phospho-L-seryl-[protein] + ADP + H(+). It carries out the reaction L-threonyl-[protein] + ATP = O-phospho-L-threonyl-[protein] + ADP + H(+). Regulator of the myosin II component of the cytoskeleton: required for regulation of cytokinesis. Functions during chemotaxis, required for maintaining the direction of cell movement, suppressing lateral pseudopod extension, and proper retraction of the posterior of chemotaxing cells. This chain is Serine/threonine-protein kinase pakA (pakA), found in Dictyostelium discoideum (Social amoeba).